The following is a 457-amino-acid chain: Ribosomal protein uS12 methylthiotransferase RimO (457 aa).

An MTTase N-terminal domain is found at Pro6–Pro116. Residues Cys15, Cys51, Cys80, Cys147, Cys151, and Cys154 each coordinate [4Fe-4S] cluster. The Radical SAM core domain occupies Leu133–Ala370. The TRAM domain maps to Glu373–Pro441.

Belongs to the methylthiotransferase family. RimO subfamily. [4Fe-4S] cluster serves as cofactor.

The protein localises to the cytoplasm. The catalysed reaction is L-aspartate(89)-[ribosomal protein uS12]-hydrogen + (sulfur carrier)-SH + AH2 + 2 S-adenosyl-L-methionine = 3-methylsulfanyl-L-aspartate(89)-[ribosomal protein uS12]-hydrogen + (sulfur carrier)-H + 5'-deoxyadenosine + L-methionine + A + S-adenosyl-L-homocysteine + 2 H(+). Its function is as follows. Catalyzes the methylthiolation of an aspartic acid residue of ribosomal protein uS12. In Xanthomonas campestris pv. campestris (strain 8004), this protein is Ribosomal protein uS12 methylthiotransferase RimO.